Here is a 442-residue protein sequence, read N- to C-terminus: C4-dicarboxylate transport protein 4 (442 aa).

The next 6 helical transmembrane spans lie at 20–40, 53–73, 90–110, 160–180, 209–229, and 233–253; these read ILYV…YFYP, FIAL…VHGI, LIYF…VGEV, GDLL…AFLG, PVGA…GSLL, and ALIG…LGAI.

The protein belongs to the dicarboxylate/amino acid:cation symporter (DAACS) (TC 2.A.23) family.

It localises to the cell inner membrane. In terms of biological role, responsible for the transport of dicarboxylates such as succinate, fumarate, and malate from the periplasm across the membrane. The polypeptide is C4-dicarboxylate transport protein 4 (Bradyrhizobium diazoefficiens (strain JCM 10833 / BCRC 13528 / IAM 13628 / NBRC 14792 / USDA 110)).